The primary structure comprises 123 residues: Small ribosomal subunit protein uS12c (123 aa).

It belongs to the universal ribosomal protein uS12 family. In terms of assembly, part of the 30S ribosomal subunit.

It is found in the plastid. The protein localises to the chloroplast. In terms of biological role, with S4 and S5 plays an important role in translational accuracy. Located at the interface of the 30S and 50S subunits. This chain is Small ribosomal subunit protein uS12c (rps12), found in Marchantia polymorpha (Common liverwort).